The sequence spans 326 residues: Pyruvate dehydrogenase E1 component subunit beta (326 aa).

Residue E62 participates in thiamine diphosphate binding.

As to quaternary structure, heterodimer of an alpha and a beta chain. Thiamine diphosphate serves as cofactor.

The enzyme catalyses N(6)-[(R)-lipoyl]-L-lysyl-[protein] + pyruvate + H(+) = N(6)-[(R)-S(8)-acetyldihydrolipoyl]-L-lysyl-[protein] + CO2. Functionally, the pyruvate dehydrogenase complex catalyzes the overall conversion of pyruvate to acetyl-CoA and CO(2). It contains multiple copies of three enzymatic components: pyruvate dehydrogenase (E1), dihydrolipoamide acetyltransferase (E2) and lipoamide dehydrogenase (E3). In Mycoplasma genitalium (strain ATCC 33530 / DSM 19775 / NCTC 10195 / G37) (Mycoplasmoides genitalium), this protein is Pyruvate dehydrogenase E1 component subunit beta (pdhB).